Here is a 365-residue protein sequence, read N- to C-terminus: tRNA N6-adenosine threonylcarbamoyltransferase (365 aa).

The Fe cation site is built by His-119 and His-123. Substrate is bound by residues Leu-141–Gly-145, Asp-174, and Gly-187. Residues Gln-184–Arg-203 form a disordered region. A compositionally biased stretch (basic and acidic residues) spans Gly-192–Arg-201. Position 289 (Asn-289) interacts with substrate. Residue Asp-317 participates in Fe cation binding. Residues Ala-342–Ala-365 are disordered.

The protein belongs to the KAE1 / TsaD family. Fe(2+) serves as cofactor.

Its subcellular location is the cytoplasm. It carries out the reaction L-threonylcarbamoyladenylate + adenosine(37) in tRNA = N(6)-L-threonylcarbamoyladenosine(37) in tRNA + AMP + H(+). Required for the formation of a threonylcarbamoyl group on adenosine at position 37 (t(6)A37) in tRNAs that read codons beginning with adenine. Is involved in the transfer of the threonylcarbamoyl moiety of threonylcarbamoyl-AMP (TC-AMP) to the N6 group of A37, together with TsaE and TsaB. TsaD likely plays a direct catalytic role in this reaction. The chain is tRNA N6-adenosine threonylcarbamoyltransferase from Ruegeria pomeroyi (strain ATCC 700808 / DSM 15171 / DSS-3) (Silicibacter pomeroyi).